The following is a 479-amino-acid chain: Ribosomal RNA small subunit methyltransferase F (479 aa).

Residues 125–131 (AAAPGSK), Glu-149, Asp-176, and Asp-194 contribute to the S-adenosyl-L-methionine site. Catalysis depends on Cys-247, which acts as the Nucleophile.

Belongs to the class I-like SAM-binding methyltransferase superfamily. RsmB/NOP family.

The protein resides in the cytoplasm. The catalysed reaction is cytidine(1407) in 16S rRNA + S-adenosyl-L-methionine = 5-methylcytidine(1407) in 16S rRNA + S-adenosyl-L-homocysteine + H(+). Specifically methylates the cytosine at position 1407 (m5C1407) of 16S rRNA. This is Ribosomal RNA small subunit methyltransferase F from Salmonella typhi.